We begin with the raw amino-acid sequence, 70 residues long: Conotoxin Cl9.1 (70 aa).

Positions 1 to 20 are cleaved as a signal peptide; sequence MMGKLGVVLFICLVLFPLET. Residues 21–50 constitute a propeptide that is removed on maturation; that stretch reads LQLEGGQQADRHVDQLEGNPNRETRTIEVR. 3 disulfide bridges follow: C51–C63, C56–C67, and C61–C70.

The protein belongs to the conotoxin M superfamily. As to expression, expressed by the venom duct.

It localises to the secreted. The chain is Conotoxin Cl9.1 from Californiconus californicus (California cone).